We begin with the raw amino-acid sequence, 97 residues long: Putative CC-type chemokine U83 (97 aa).

2 disulfides stabilise this stretch: Cys32–Cys62 and Cys33–Cys76.

It belongs to the intercrine beta (chemokine CC) family. Highly divergent.

The protein is Putative CC-type chemokine U83 (U83) of Human herpesvirus 6A (strain Uganda-1102) (HHV-6 variant A).